The primary structure comprises 205 residues: RNA pyrophosphohydrolase (205 aa).

Residues 6 to 149 form the Nudix hydrolase domain; sequence GFRPNVGIVL…KRGVYARALR (144 aa). The Nudix box signature appears at 38–59; it reads GGMNTDETPVEAMYRELREETG. Positions 178–205 are disordered; it reads GSSAAGHDSPRKRPRKRNGARAMRINND. Positions 187 to 196 are enriched in basic residues; it reads PRKRPRKRNG.

This sequence belongs to the Nudix hydrolase family. RppH subfamily. A divalent metal cation is required as a cofactor.

Its function is as follows. Accelerates the degradation of transcripts by removing pyrophosphate from the 5'-end of triphosphorylated RNA, leading to a more labile monophosphorylated state that can stimulate subsequent ribonuclease cleavage. The polypeptide is RNA pyrophosphohydrolase (Xanthomonas axonopodis pv. citri (strain 306)).